Here is a 103-residue protein sequence, read N- to C-terminus: Large ribosomal subunit protein bL21 (103 aa).

Belongs to the bacterial ribosomal protein bL21 family. In terms of assembly, part of the 50S ribosomal subunit. Contacts protein L20.

This protein binds to 23S rRNA in the presence of protein L20. The chain is Large ribosomal subunit protein bL21 from Shewanella baltica (strain OS223).